The primary structure comprises 393 residues: uncharacterized protein (393 aa).

The [4Fe-4S] cluster site is built by C9, C15, C18, and C97. Residues Q231, Y258, E279, and D325 each coordinate S-adenosyl-L-methionine. Residue C352 is the Nucleophile of the active site.

This sequence belongs to the class I-like SAM-binding methyltransferase superfamily. RNA M5U methyltransferase family.

This is an uncharacterized protein from Leptospira interrogans serogroup Icterohaemorrhagiae serovar Lai (strain 56601).